We begin with the raw amino-acid sequence, 551 residues long: Membrane protein insertase YidC (551 aa).

Residues 3-23 (ANHIRILLLVTIAIMLISLMG) form a helical membrane-spanning segment. Over residues 30-43 (PSNSSQSQTTQTQQ) the composition is skewed to low complexity. The tract at residues 30-61 (PSNSSQSQTTQTQQDNSHYNSDTPATTNVSTS) is disordered. Polar residues predominate over residues 44-61 (DNSHYNSDTPATTNVSTS). A run of 3 helical transmembrane segments spans residues 361–381 (LVGN…LIFY), 431–451 (LSGC…YWVL), and 504–524 (IMMF…SGLV).

Belongs to the OXA1/ALB3/YidC family. Type 1 subfamily. As to quaternary structure, interacts with the Sec translocase complex via SecD. Specifically interacts with transmembrane segments of nascent integral membrane proteins during membrane integration.

Its subcellular location is the cell inner membrane. Required for the insertion and/or proper folding and/or complex formation of integral membrane proteins into the membrane. Involved in integration of membrane proteins that insert both dependently and independently of the Sec translocase complex, as well as at least some lipoproteins. Aids folding of multispanning membrane proteins. The protein is Membrane protein insertase YidC of Francisella philomiragia subsp. philomiragia (strain ATCC 25017 / CCUG 19701 / FSC 153 / O#319-036).